A 379-amino-acid polypeptide reads, in one-letter code: Cell division protein FtsZ (379 aa).

GTP is bound by residues 18–22 (GGGVN), 105–107 (GTG), glutamate 136, arginine 140, and aspartate 184.

The protein belongs to the FtsZ family. In terms of assembly, homodimer. Polymerizes to form a dynamic ring structure in a strictly GTP-dependent manner. Interacts directly with several other division proteins.

Its subcellular location is the cytoplasm. Essential cell division protein that forms a contractile ring structure (Z ring) at the future cell division site. The regulation of the ring assembly controls the timing and the location of cell division. One of the functions of the FtsZ ring is to recruit other cell division proteins to the septum to produce a new cell wall between the dividing cells. Binds GTP and shows GTPase activity. This Mycobacterium bovis (strain ATCC BAA-935 / AF2122/97) protein is Cell division protein FtsZ.